The sequence spans 99 residues: NADH-quinone oxidoreductase subunit K (99 aa).

The next 3 membrane-spanning stretches (helical) occupy residues 3–23 (PANY…GVLV), 28–48 (IVVF…LVTF), and 62–82 (FFVM…ILAI).

This sequence belongs to the complex I subunit 4L family. In terms of assembly, NDH-1 is composed of 14 different subunits. Subunits NuoA, H, J, K, L, M, N constitute the membrane sector of the complex.

It is found in the cell membrane. It catalyses the reaction a quinone + NADH + 5 H(+)(in) = a quinol + NAD(+) + 4 H(+)(out). NDH-1 shuttles electrons from NADH, via FMN and iron-sulfur (Fe-S) centers, to quinones in the respiratory chain. The immediate electron acceptor for the enzyme in this species is believed to be a menaquinone. Couples the redox reaction to proton translocation (for every two electrons transferred, four hydrogen ions are translocated across the cytoplasmic membrane), and thus conserves the redox energy in a proton gradient. This chain is NADH-quinone oxidoreductase subunit K, found in Parafrankia sp. (strain EAN1pec).